A 676-amino-acid polypeptide reads, in one-letter code: Envelope glycoprotein (676 aa).

The signal sequence occupies residues 1-32; it reads MGVTGILQLPRDRFKRTSFFLWVIILFQRTFS. Over 33–650 the chain is Extracellular; sequence IPLGVIHNST…NDNWWTGWRQ (618 aa). N-linked (GlcNAc...) asparagine; by host glycosylation occurs at asparagine 40. Intrachain disulfides connect cysteine 53-cysteine 609, cysteine 108-cysteine 135, cysteine 121-cysteine 147, cysteine 511-cysteine 556, and cysteine 601-cysteine 608. The interval 54-201 is receptor-binding; that stretch reads RDKLSSTNQL…DFFSSHPLRE (148 aa). 11 N-linked (GlcNAc...) asparagine; by host glycosylation sites follow: asparagine 204, asparagine 228, asparagine 238, asparagine 257, asparagine 268, asparagine 296, asparagine 317, asparagine 333, asparagine 346, asparagine 386, and asparagine 413. Residues 305–485 are mucin-like region; that stretch reads ELSFTAVSNR…SGKLGLITNT (181 aa). The segment covering 314-335 has biased composition (polar residues); the sequence is RAKNISGQSPARTSSDPGTNTT. A disordered region spans residues 314 to 337; the sequence is RAKNISGQSPARTSSDPGTNTTTE. Disordered stretches follow at residues 373 to 392 and 402 to 479; these read TSLR…HNTP and TQVE…SGKL. The segment covering 414-427 has biased composition (low complexity); it reads ASTTSDTPPATTAA. 3 N-linked (GlcNAc...) asparagine; by host glycosylation sites follow: asparagine 436, asparagine 454, and asparagine 462. The span at 447–464 shows a compositional bias: polar residues; it reads ATTTSPQNHSETAGNNNT. The interval 524–539 is fusion peptide; that stretch reads GAAIGLAWIPYFGPAA. The stretch at 554–595 forms a coiled coil; it reads LICGLRQLANETTQALQLFLRATTELRTFSILNRKAIDFLLQ. Residue asparagine 563 is glycosylated (N-linked (GlcNAc...) asparagine; by host). Positions 615 to 634 form a coiled coil; that stretch reads WTKNITDKIDQIIHDFVDKT. Asparagine 618 carries N-linked (GlcNAc...) asparagine; by host glycosylation. The chain crosses the membrane as a helical span at residues 651-671; sequence WIPAGIGVTGVIIAVIALFCI. Residues cysteine 670 and cysteine 672 are each lipidated (S-palmitoyl cysteine; by host). Topologically, residues 672 to 676 are cytoplasmic; it reads CKFVF.

It belongs to the filoviruses glycoprotein family. In terms of assembly, homotrimer; each monomer consists of a GP1 and a GP2 subunit linked by disulfide bonds. The resulting peplomers (GP1,2) protrude from the virus surface as spikes. Interacts with host integrin alpha-V/ITGAV. Interacts with host CLEC10A. Binds also to host CD209 and CLEC4M/DC-SIGN(R). Interacts with host FOLR1. Interacts with BST2; this interaction inhibits the antiviral effect of BST2 and this allows viral release from infected cells. Interacts with host FCN1; this interaction enhances viral entry. Interacts with host TLR4; this interaction induces cell death in T-lymphocytes or proinflammatory cytokines and SOCS1 production in monocytes. Interacts with host entry receptor NPC1. As to quaternary structure, GP1 and GP2delta are part of GP1,2delta soluble complexes released by ectodomain shedding. The signal peptide region modulates GP's high mannose glycosylation, thereby determining the efficiency of the interactions with DC-SIGN(R). Post-translationally, N-glycosylated. In terms of processing, O-glycosylated in the mucin-like region. Palmitoylation of GP2 is not required for its function. Post-translationally, specific enzymatic cleavages in vivo yield mature proteins. The precursor is processed into GP1 and GP2 by host cell furin in the trans Golgi, and maybe by other host proteases, to yield the mature GP1 and GP2 proteins. The cleavage site corresponds to the furin optimal cleavage sequence [KR]-X-[KR]-R. This cleavage does not seem to be required for function. After the internalization of the virus into cell endosomes, GP1 C-terminus is removed by the endosomal proteases cathepsin B, cathepsin L, or both, leaving a 19-kDa N-terminal fragment which is further digested by cathepsin B. Proteolytic processing of GP1,2 by host ADAM17 can remove the transmembrane anchor of GP2 and leads to shedding of complexes consisting in GP1 and truncated GP2 (GP1,2delta).

The protein localises to the virion membrane. The protein resides in the host cell membrane. Its subcellular location is the secreted. Trimeric GP1,2 complexes form the virion surface spikes and mediate the viral entry processes, with GP1 acting as the receptor-binding subunit and GP2 as the membrane fusion subunit. At later times of infection, down-regulates the expression of various host cell surface molecules that are essential for immune surveillance and cell adhesion. Down-modulates several integrins including ITGA1, ITGA2, ITGA3, ITGA4, ITGA5, ITGA6, ITGAV and ITGB1. This decrease in cell adhesion molecules may lead to cell detachment, contributing to the disruption of blood vessel integrity and hemorrhages developed during infection (cytotoxicity). Interacts with host TLR4 and thereby stimulates the differentiation and activation of monocytes leading to bystander death of T-lymphocytes. Down-regulates as well the function of host natural killer cells. Counteracts the antiviral effect of host BST2/tetherin that restricts release of progeny virions from infected cells. However, cooperates with VP40 and host BST2 to activate canonical NF-kappa-B pathway in a manner dependent on neddylation. Its function is as follows. Functions as a decoy for anti-GP1,2 antibodies thereby contributing to viral immune evasion. Interacts and activates host macrophages and dendritic cells inducing up-regulation of cytokine transcription. This effect is mediated throught activation of host TLR4. Functionally, responsible for binding to the receptor(s) on target cells. Interacts with CD209/DC-SIGN and CLEC4M/DC-SIGNR which act as cofactors for virus entry into dendritic cells (DCs) and endothelial cells. Binding to the macrophage specific lectin CLEC10A also seems to enhance virus infectivity. Interaction with FOLR1/folate receptor alpha may be a cofactor for virus entry in some cell types, although results are contradictory. Members of the Tyro3 receptor tyrosine kinase family also seem to be cell entry factors in filovirus infection. Once attached, the virions are internalized through clathrin-dependent endocytosis and/or macropinocytosis. After internalization of the virus into the endosomes of the host cell, proteolysis of GP1 by two cysteine proteases, CTSB/cathepsin B and CTSL/cathepsin L removes the glycan cap and allows GP1 binding to the host entry receptor NPC1. NPC1-binding, Ca(2+) and acidic pH induce a conformational change of GP2, which unmasks its fusion peptide and permit membranes fusion. In terms of biological role, acts as a class I viral fusion protein. Under the current model, the protein has at least 3 conformational states: pre-fusion native state, pre-hairpin intermediate state, and post-fusion hairpin state. During viral and target cell membrane fusion, the coiled coil regions (heptad repeats) assume a trimer-of-hairpins structure, positioning the fusion peptide in close proximity to the C-terminal region of the ectodomain. The formation of this structure appears to drive apposition and subsequent fusion of viral and target cell membranes. Responsible for penetration of the virus into the cell cytoplasm by mediating the fusion of the membrane of the endocytosed virus particle with the endosomal membrane. Low pH in endosomes induces an irreversible conformational change in GP2, releasing the fusion hydrophobic peptide. The chain is Envelope glycoprotein (GP) from Epomops franqueti (Franquet's epauletted fruit bat).